Reading from the N-terminus, the 417-residue chain is Acetate kinase (417 aa).

Asparagine 9 contacts Mg(2+). Position 16 (lysine 16) interacts with ATP. Arginine 90 is a substrate binding site. The Proton donor/acceptor role is filled by aspartate 147. ATP-binding positions include 207-211, 282-284, and 330-334; these read HIGNG, DLR, and GIGEN. Glutamate 384 is a binding site for Mg(2+).

The protein belongs to the acetokinase family. Homodimer. Requires Mg(2+) as cofactor. The cofactor is Mn(2+).

The protein localises to the cytoplasm. It carries out the reaction acetate + ATP = acetyl phosphate + ADP. The protein operates within metabolic intermediate biosynthesis; acetyl-CoA biosynthesis; acetyl-CoA from acetate: step 1/2. Catalyzes the formation of acetyl phosphate from acetate and ATP. Can also catalyze the reverse reaction. The polypeptide is Acetate kinase (Staphylococcus epidermidis (strain ATCC 35984 / DSM 28319 / BCRC 17069 / CCUG 31568 / BM 3577 / RP62A)).